A 64-amino-acid chain; its full sequence is Large ribosomal subunit protein eL37 (64 aa).

Cys-20, Cys-23, Cys-35, and Cys-38 together coordinate Zn(2+). Residues 20–38 (CRRCGRRAFHVRKKVCAAC) form a C4-type zinc finger.

This sequence belongs to the eukaryotic ribosomal protein eL37 family. The cofactor is Zn(2+).

Functionally, binds to the 23S rRNA. This chain is Large ribosomal subunit protein eL37, found in Methanococcus maripaludis (strain C6 / ATCC BAA-1332).